A 358-amino-acid chain; its full sequence is Peptide chain release factor 1 (358 aa).

At glutamine 233 the chain carries N5-methylglutamine.

The protein belongs to the prokaryotic/mitochondrial release factor family. In terms of processing, methylated by PrmC. Methylation increases the termination efficiency of RF1.

Its subcellular location is the cytoplasm. In terms of biological role, peptide chain release factor 1 directs the termination of translation in response to the peptide chain termination codons UAG and UAA. The polypeptide is Peptide chain release factor 1 (Lachnoclostridium phytofermentans (strain ATCC 700394 / DSM 18823 / ISDg) (Clostridium phytofermentans)).